A 323-amino-acid polypeptide reads, in one-letter code: Fructose-1,6-bisphosphatase class 1 (323 aa).

Glutamate 88, aspartate 107, leucine 109, and aspartate 110 together coordinate Mg(2+). Substrate is bound by residues aspartate 110–serine 113 and asparagine 200. Glutamate 272 is a Mg(2+) binding site.

Belongs to the FBPase class 1 family. In terms of assembly, homotetramer. Mg(2+) is required as a cofactor.

It is found in the cytoplasm. It catalyses the reaction beta-D-fructose 1,6-bisphosphate + H2O = beta-D-fructose 6-phosphate + phosphate. It participates in carbohydrate biosynthesis; gluconeogenesis. The chain is Fructose-1,6-bisphosphatase class 1 from Acinetobacter baylyi (strain ATCC 33305 / BD413 / ADP1).